We begin with the raw amino-acid sequence, 280 residues long: Dermonecrotic toxin LsSicTox-alphaIA1 (280 aa).

His-12 is a catalytic residue. Glu-32 and Asp-34 together coordinate Mg(2+). The active-site Nucleophile is His-48. Disulfide bonds link Cys-52–Cys-58 and Cys-54–Cys-197. Residue Asp-92 participates in Mg(2+) binding.

This sequence belongs to the arthropod phospholipase D family. Class II subfamily. Mg(2+) serves as cofactor. Expressed by the venom gland.

Its subcellular location is the secreted. It catalyses the reaction an N-(acyl)-sphingosylphosphocholine = an N-(acyl)-sphingosyl-1,3-cyclic phosphate + choline. It carries out the reaction an N-(acyl)-sphingosylphosphoethanolamine = an N-(acyl)-sphingosyl-1,3-cyclic phosphate + ethanolamine. The catalysed reaction is a 1-acyl-sn-glycero-3-phosphocholine = a 1-acyl-sn-glycero-2,3-cyclic phosphate + choline. The enzyme catalyses a 1-acyl-sn-glycero-3-phosphoethanolamine = a 1-acyl-sn-glycero-2,3-cyclic phosphate + ethanolamine. Its function is as follows. Dermonecrotic toxins cleave the phosphodiester linkage between the phosphate and headgroup of certain phospholipids (sphingolipid and lysolipid substrates), forming an alcohol (often choline) and a cyclic phosphate. This toxin acts on sphingomyelin (SM). It may also act on ceramide phosphoethanolamine (CPE), lysophosphatidylcholine (LPC) and lysophosphatidylethanolamine (LPE), but not on lysophosphatidylserine (LPS), and lysophosphatidylglycerol (LPG). It acts by transphosphatidylation, releasing exclusively cyclic phosphate products as second products. Induces dermonecrosis, hemolysis, increased vascular permeability, edema, inflammatory response, and platelet aggregation. The polypeptide is Dermonecrotic toxin LsSicTox-alphaIA1 (Loxosceles similis (Brazilian brown spider)).